The following is a 203-amino-acid chain: A-type ATP synthase subunit E (203 aa).

It belongs to the V-ATPase E subunit family. In terms of assembly, has multiple subunits with at least A(3), B(3), C, D, E, F, H, I and proteolipid K(x).

Its subcellular location is the cell membrane. In terms of biological role, component of the A-type ATP synthase that produces ATP from ADP in the presence of a proton gradient across the membrane. The polypeptide is A-type ATP synthase subunit E (Methanococcus vannielii (strain ATCC 35089 / DSM 1224 / JCM 13029 / OCM 148 / SB)).